A 41-amino-acid polypeptide reads, in one-letter code: Large ribosomal subunit protein bL36 (41 aa).

Belongs to the bacterial ribosomal protein bL36 family.

The sequence is that of Large ribosomal subunit protein bL36 from Gluconobacter oxydans (strain 621H) (Gluconobacter suboxydans).